Here is a 131-residue protein sequence, read N- to C-terminus: Small ribosomal subunit protein uS8 (131 aa).

The protein belongs to the universal ribosomal protein uS8 family. Part of the 30S ribosomal subunit. Contacts proteins S5 and S12.

Functionally, one of the primary rRNA binding proteins, it binds directly to 16S rRNA central domain where it helps coordinate assembly of the platform of the 30S subunit. This is Small ribosomal subunit protein uS8 from Mycoplasmopsis agalactiae (strain NCTC 10123 / CIP 59.7 / PG2) (Mycoplasma agalactiae).